A 98-amino-acid chain; its full sequence is snRNA-activating protein complex subunit 5 (98 aa).

The span at 73 to 82 (QTTLELSTKS) shows a compositional bias: polar residues. The segment at 73 to 98 (QTTLELSTKSHVTEEEEEEEEEESDS) is disordered. Threonine 85 carries the post-translational modification Phosphothreonine. Positions 86–98 (EEEEEEEEEESDS) are enriched in acidic residues.

In terms of assembly, part of the SNAPc complex composed of 5 subunits: SNAPC1, SNAPC2, SNAPC3, SNAPC4 and SNAPC5. SNAPC5 interacts with SNAPC4.

The protein resides in the nucleus. In terms of biological role, part of the SNAPc complex required for the transcription of both RNA polymerase II and III small-nuclear RNA genes. Binds to the proximal sequence element (PSE), a non-TATA-box basal promoter element common to these 2 types of genes. Recruits TBP and BRF2 to the U6 snRNA TATA box. The sequence is that of snRNA-activating protein complex subunit 5 (SNAPC5) from Homo sapiens (Human).